Consider the following 727-residue polypeptide: E3 SUMO-protein ligase pli1 (727 aa).

One can recognise an SAP domain in the interval 18 to 52; it reads ETGLIIPQLKDILRVFGLRLSGTKAELITRIKQLI. Positions 108 to 261 constitute a PINIT domain; that stretch reads YSRPFAPVVH…SVVVCFVKVY (154 aa). Residues 290–371 form an SP-RING-type zinc finger; that stretch reads QDADIIATST…MQHILESTPS (82 aa). Zn(2+)-binding residues include Cys321, His323, Cys344, and Cys347. Residues Ser395 and Ser396 each carry the phosphoserine modification. Disordered stretches follow at residues 408-558 and 706-727; these read ELSD…TQHS and QSNNSYHNSGFEGTGNTFQSID. 2 stretches are compositionally biased toward polar residues: residues 417-435 and 459-494; these read TMANKSNDQPTRRASTHNS and VATSTTESPSNATKENSLSRNVQSPNIDTAISNRST. Residues 546-558 are compositionally biased toward low complexity; the sequence is SQQNNNNSNTQHS.

It belongs to the PIAS family. In terms of assembly, interacts with hus5/ubc9.

The protein resides in the nucleus. It participates in protein modification; protein sumoylation. In terms of biological role, acts as an E3 ligase mediating SUMO/Smt3 attachment to other proteins. Involved in the maintenance of the centromere and in telomere length. Regulates recombination, via extension sumoylation, particularly within the heterochromatin repeats. The polypeptide is E3 SUMO-protein ligase pli1 (pli1) (Schizosaccharomyces pombe (strain 972 / ATCC 24843) (Fission yeast)).